The primary structure comprises 577 residues: Arginine--tRNA ligase (577 aa).

The short motif at 122–132 (PNVAKEMHVGH) is the 'HIGH' region element.

The protein belongs to the class-I aminoacyl-tRNA synthetase family. As to quaternary structure, monomer.

It localises to the cytoplasm. The enzyme catalyses tRNA(Arg) + L-arginine + ATP = L-arginyl-tRNA(Arg) + AMP + diphosphate. This Histophilus somni (strain 129Pt) (Haemophilus somnus) protein is Arginine--tRNA ligase.